The primary structure comprises 190 residues: RNA pyrophosphohydrolase (190 aa).

The 144-residue stretch at 6 to 149 folds into the Nudix hydrolase domain; sequence GYRPNVGIIL…KRDVYTQALN (144 aa). The short motif at 38–59 is the Nudix box element; that stretch reads GGIKYGESPVQAMYRELHEEVG. A disordered region spans residues 167–190; it reads QRVHGPRSTDSPSSETDGHAHIAG.

This sequence belongs to the Nudix hydrolase family. RppH subfamily. A divalent metal cation serves as cofactor.

In terms of biological role, accelerates the degradation of transcripts by removing pyrophosphate from the 5'-end of triphosphorylated RNA, leading to a more labile monophosphorylated state that can stimulate subsequent ribonuclease cleavage. This chain is RNA pyrophosphohydrolase, found in Bordetella pertussis (strain Tohama I / ATCC BAA-589 / NCTC 13251).